Consider the following 94-residue polypeptide: UPF0337 protein NE2439 (94 aa).

The interval 74–94 is disordered; that stretch reads KNVGEAVSSRQKSVKKRSLYT. The segment covering 85 to 94 has biased composition (basic residues); that stretch reads KSVKKRSLYT.

The protein belongs to the UPF0337 (CsbD) family.

In Nitrosomonas europaea (strain ATCC 19718 / CIP 103999 / KCTC 2705 / NBRC 14298), this protein is UPF0337 protein NE2439.